We begin with the raw amino-acid sequence, 459 residues long: Exodeoxyribonuclease 7 large subunit (459 aa).

Belongs to the XseA family. As to quaternary structure, heterooligomer composed of large and small subunits.

It is found in the cytoplasm. It carries out the reaction Exonucleolytic cleavage in either 5'- to 3'- or 3'- to 5'-direction to yield nucleoside 5'-phosphates.. In terms of biological role, bidirectionally degrades single-stranded DNA into large acid-insoluble oligonucleotides, which are then degraded further into small acid-soluble oligonucleotides. This Pseudomonas aeruginosa (strain UCBPP-PA14) protein is Exodeoxyribonuclease 7 large subunit.